The primary structure comprises 544 residues: Putative cysteine ligase BshC (544 aa).

A coiled-coil region spans residues 431-463 (LNDTCRTIKEEHEKFIQELSRLDEKIYDFEEKN).

It belongs to the BshC family.

Functionally, involved in bacillithiol (BSH) biosynthesis. May catalyze the last step of the pathway, the addition of cysteine to glucosamine malate (GlcN-Mal) to generate BSH. This is Putative cysteine ligase BshC from Natranaerobius thermophilus (strain ATCC BAA-1301 / DSM 18059 / JW/NM-WN-LF).